The sequence spans 561 residues: DNA ligase B (561 aa).

Lys-125 functions as the N6-AMP-lysine intermediate in the catalytic mechanism.

It belongs to the NAD-dependent DNA ligase family. LigB subfamily.

It carries out the reaction NAD(+) + (deoxyribonucleotide)n-3'-hydroxyl + 5'-phospho-(deoxyribonucleotide)m = (deoxyribonucleotide)n+m + AMP + beta-nicotinamide D-nucleotide.. In terms of biological role, catalyzes the formation of phosphodiester linkages between 5'-phosphoryl and 3'-hydroxyl groups in double-stranded DNA using NAD as a coenzyme and as the energy source for the reaction. This chain is DNA ligase B, found in Salmonella paratyphi A (strain AKU_12601).